We begin with the raw amino-acid sequence, 391 residues long: MAKSKFERTKPHVNIGTIGHVDHGKTSLTAAITKYFGEFKAYDQIDAAPEERARGITISTAHVEYETEKRHYAHVDCPGHADYVKNMITGAAQMDGAILVVSAADGPMPQTREHILLARQVGVPAIVVFLNKVDQVDDAELLELVELEIRELLSKYDFPGDDIPIVKGSALAALEDKDKSIGEDAVRLLMSEVDNYIPTPERPIDQPFLLPIEDVFSISGRGTVVTGRVERGVIKVGEEIEIIGIRPTSKTTVTGVEMFRKLLDQGQAGDNIGALLRGVDREGIERGQVLAKPGSVTPHTRFKAEAYILTKDEGGRHTPFFTNYRPQFYFRTTDVTGIVTLPEGIEMVMPGDNVAMDVSLIVPIAMEEKLRFAIREGGRTVGAGIVSKIIE.

Positions 10-201 (KPHVNIGTIG…EVDNYIPTPE (192 aa)) constitute a tr-type G domain. Positions 19-26 (GHVDHGKT) are G1. 19–26 (GHVDHGKT) lines the GTP pocket. Mg(2+) is bound at residue threonine 26. Residues 55–59 (GITIS) form a G2 region. Residues 76 to 79 (DCPG) are G3. GTP is bound by residues 76 to 80 (DCPGH) and 131 to 134 (NKVD). The interval 131–134 (NKVD) is G4. Residues 169–171 (SAL) form a G5 region.

Belongs to the TRAFAC class translation factor GTPase superfamily. Classic translation factor GTPase family. EF-Tu/EF-1A subfamily. In terms of assembly, monomer.

It localises to the cytoplasm. It carries out the reaction GTP + H2O = GDP + phosphate + H(+). GTP hydrolase that promotes the GTP-dependent binding of aminoacyl-tRNA to the A-site of ribosomes during protein biosynthesis. This is Elongation factor Tu 2 from Bartonella quintana (strain Toulouse) (Rochalimaea quintana).